A 219-amino-acid polypeptide reads, in one-letter code: Ras-related protein Rab-3B (219 aa).

Ala-2 is modified (N-acetylalanine). 9 residues coordinate GTP: Ser-31, Ser-32, Val-33, Gly-34, Lys-35, Thr-36, Ser-37, Pro-49, and Ser-53. Ser-32 contributes to the GDP binding site. The GDP site is built by Gly-34, Lys-35, Thr-36, and Ser-37. Thr-36 lines the Mg(2+) pocket. A Switch 1 motif is present at residues 45-58 (DTFTPAFVSTVGID). The Mg(2+) site is built by Thr-54 and Asp-77. Residues 78 to 96 (TAGQERYRTITTAYYRGAM) carry the Switch 2 motif. A GTP-binding site is contributed by Gly-80. Thr-86 carries the post-translational modification Phosphothreonine; by LRRK2. 3 residues coordinate GTP: Asn-135, Lys-136, and Asp-138. GDP contacts are provided by Asn-135, Lys-136, Asp-138, Met-139, Ala-166, and Lys-167. GTP is bound by residues Ala-166 and Lys-167. 2 positions are modified to phosphoserine: Ser-188 and Ser-190. S-geranylgeranyl cysteine attachment occurs at residues Cys-217 and Cys-219. Cys-219 is subject to Cysteine methyl ester.

It belongs to the small GTPase superfamily. Rab family. As to quaternary structure, interacts with RIMS1, RIMS2, RPH3A and RPH3AL. The GTP-bound form interacts with GAS8/DRC4 (via coiled-coil domains). The GTP-bound form interacts with REP15. Interacts with GDI2, CHM and CHML; phosphorylation at Thr-86 disrupts these interactions. Interacts with MADD (via uDENN domain); the GTP-bound form is preferred for interaction. Mg(2+) is required as a cofactor. In terms of processing, phosphorylation of Thr-86 in the switch II region by LRRK2 prevents the association of RAB regulatory proteins, including CHM, CHML and RAB GDP dissociation inhibitor GDI2.

Its subcellular location is the cell membrane. It is found in the golgi apparatus. The catalysed reaction is GTP + H2O = GDP + phosphate + H(+). With respect to regulation, regulated by guanine nucleotide exchange factors (GEFs) which promote the exchange of bound GDP for free GTP. Regulated by GTPase activating proteins (GAPs) which increase the GTP hydrolysis activity. Inhibited by GDP dissociation inhibitors (GDIs) which prevent Rab-GDP dissociation. Its function is as follows. The small GTPases Rab are key regulators of intracellular membrane trafficking, from the formation of transport vesicles to their fusion with membranes. Rabs cycle between an inactive GDP-bound form and an active GTP-bound form that is able to recruit to membranes different sets of downstream effectors directly responsible for vesicle formation, movement, tethering and fusion. The chain is Ras-related protein Rab-3B from Homo sapiens (Human).